Here is a 1125-residue protein sequence, read N- to C-terminus: Angiopoietin-1 receptor (1125 aa).

Residues 1 to 22 form the signal peptide; it reads MDSLAGLVLCGVSLLLSATVDG. Over 23–748 the chain is Extracellular; that stretch reads AMDLILINSL…PADLGGRKML (726 aa). Cysteine 44 and cysteine 102 are joined by a disulfide. Positions 44–123 constitute an Ig-like C2-type 1 domain; that stretch reads CIASGWRPHE…RTMKMRQQAS (80 aa). Asparagine 158 carries an N-linked (GlcNAc...) asparagine glycan. EGF-like domains are found at residues 210-252, 254-299, and 301-341; these read RCEA…RTCE, ACEP…LQCN, and ACQP…LQCE. Cystine bridges form between cysteine 211–cysteine 220, cysteine 224–cysteine 233, cysteine 227–cysteine 240, cysteine 242–cysteine 251, cysteine 255–cysteine 264, cysteine 268–cysteine 274, cysteine 280–cysteine 287, cysteine 289–cysteine 298, cysteine 302–cysteine 311, cysteine 315–cysteine 323, cysteine 317–cysteine 329, cysteine 331–cysteine 340, and cysteine 370–cysteine 424. One can recognise an Ig-like C2-type 2 domain in the interval 350-440; that stretch reads PKIEDLPDHI…GMVEKPFNIS (91 aa). Fibronectin type-III domains follow at residues 447-541, 545-637, and 642-735; these read PLNA…TASI, PPRG…TLSD, and QPEN…TLSE. Residues 749-769 traverse the membrane as a helical segment; sequence LIAILGSAGMTCLTVLLAFLI. The Cytoplasmic portion of the chain corresponds to 770 to 1125; that stretch reads MLQLKRANVQ…GIDCSAEEAA (356 aa). The Protein kinase domain maps to 825 to 1097; it reads IKFQDVIGEG…QILVSLNRML (273 aa). ATP-binding positions include 831 to 839 and lysine 856; that span reads IGEGNFGQV. Residue tyrosine 861 is modified to Phosphotyrosine; by autocatalysis. The active-site Proton acceptor is aspartate 965. A phosphotyrosine; by autocatalysis mark is found at tyrosine 993, tyrosine 1103, and tyrosine 1109.

It belongs to the protein kinase superfamily. Tyr protein kinase family. Tie subfamily. Homodimer. Heterodimer with TIE1. Interacts with ANGPT1, ANGPT2 and ANGPT4. At cell-cell contacts in quiescent cells, forms a signaling complex composed of ANGPT1 plus TEK molecules from two adjoining cells. In the absence of endothelial cell-cell contacts, interaction with ANGPT1 mediates contacts with the extracellular matrix. Interacts (tyrosine phosphorylated) with TNIP2. Interacts (tyrosine phosphorylated) with SHC1 (via SH2 domain). Interacts with PTPRB; this promotes endothelial cell-cell adhesion. Interacts with DOK2, GRB2, GRB7, GRB14, PIK3R1 and PTPN11/SHP2. Colocalizes with DOK2 at contacts with the extracellular matrix in migrating cells. In terms of processing, proteolytic processing leads to the shedding of the extracellular domain (soluble TIE-2 alias sTIE-2). Autophosphorylated on tyrosine residues in response to ligand binding. Autophosphorylation occurs in trans, i.e. one subunit of the dimeric receptor phosphorylates tyrosine residues on the other subunit. Autophosphorylation occurs in a sequential manner, where Tyr-993 in the kinase activation loop is phosphorylated first, followed by autophosphorylation at Tyr-1109 and at additional tyrosine residues. ANGPT1-induced phosphorylation is impaired during hypoxia, due to increased expression of ANGPT2. Phosphorylation is important for interaction with GRB14, PIK3R1 and PTPN11. Phosphorylation at Tyr-1103 is important for interaction with GRB2 and GRB7. Phosphorylation at Tyr-1109 is important for interaction with DOK2 and for coupling to downstream signal transduction pathways in endothelial cells. Dephosphorylated by PTPRB. Post-translationally, ubiquitinated. The phosphorylated receptor is ubiquitinated and internalized, leading to its degradation. As to expression, specifically expressed in developing vascular endothelial cells.

The protein localises to the cell membrane. The protein resides in the cell junction. Its subcellular location is the focal adhesion. It is found in the cytoplasm. It localises to the cytoskeleton. The protein localises to the secreted. The catalysed reaction is L-tyrosyl-[protein] + ATP = O-phospho-L-tyrosyl-[protein] + ADP + H(+). Angiopoietin binding leads to receptor dimerization and activation by autophosphorylation at Tyr-993 on the kinase activation loop. In terms of biological role, tyrosine-protein kinase that acts as a cell-surface receptor for ANGPT1, ANGPT2 and ANGPT4 and regulates angiogenesis, endothelial cell survival, proliferation, migration, adhesion and cell spreading, reorganization of the actin cytoskeleton, but also maintenance of vascular quiescence. Has anti-inflammatory effects by preventing the leakage of pro-inflammatory plasma proteins and leukocytes from blood vessels. Required for normal angiogenesis and heart development during embryogenesis. Required for post-natal hematopoiesis. After birth, activates or inhibits angiogenesis, depending on the context. Inhibits angiogenesis and promotes vascular stability in quiescent vessels, where endothelial cells have tight contacts. In quiescent vessels, ANGPT1 oligomers recruit TEK to cell-cell contacts, forming complexes with TEK molecules from adjoining cells, and this leads to preferential activation of phosphatidylinositol 3-kinase and the AKT1 signaling cascades. In migrating endothelial cells that lack cell-cell adhesions, ANGT1 recruits TEK to contacts with the extracellular matrix, leading to the formation of focal adhesion complexes, activation of PTK2/FAK and of the downstream kinases MAPK1/ERK2 and MAPK3/ERK1, and ultimately to the stimulation of sprouting angiogenesis. ANGPT1 signaling triggers receptor dimerization and autophosphorylation at specific tyrosine residues that then serve as binding sites for scaffold proteins and effectors. Signaling is modulated by ANGPT2 that has lower affinity for TEK, can promote TEK autophosphorylation in the absence of ANGPT1, but inhibits ANGPT1-mediated signaling by competing for the same binding site. Signaling is also modulated by formation of heterodimers with TIE1, and by proteolytic processing that gives rise to a soluble TEK extracellular domain. The soluble extracellular domain modulates signaling by functioning as decoy receptor for angiopoietins. TEK phosphorylates DOK2, GRB7, GRB14, PIK3R1, SHC1 and TIE1. The chain is Angiopoietin-1 receptor (TEK) from Bos taurus (Bovine).